The chain runs to 238 residues: Small ribosomal subunit protein uS3 (238 aa).

The 69-residue stretch at 39-107 (MREFIHDYAK…ELHLNIVEIR (69 aa)) folds into the KH type-2 domain. A compositionally biased stretch (basic and acidic residues) spans 212 to 222 (PQAHDRRHSEA). A disordered region spans residues 212 to 238 (PQAHDRRHSEAQEGAAPRPPRRDRERA).

The protein belongs to the universal ribosomal protein uS3 family. In terms of assembly, part of the 30S ribosomal subunit. Forms a tight complex with proteins S10 and S14.

Functionally, binds the lower part of the 30S subunit head. Binds mRNA in the 70S ribosome, positioning it for translation. The sequence is that of Small ribosomal subunit protein uS3 from Cereibacter sphaeroides (strain ATCC 17025 / ATH 2.4.3) (Rhodobacter sphaeroides).